The primary structure comprises 178 residues: MKFLSDLLPVLLFFAAYSLTGNIYLATGVAIVSTAAQVGISWFKHRKVEPMQWVSLALILVLGGLTLVLHDKRFIMWKPTVLYWLLGAGFLISDLAFRKNPIKAMMGKQIELPERLWAKLTFAWSGFFAFMGALNLFVAFNFSEAVWVNFKLFGGMGLMLVFVLAQGMVLSRYIQEKN.

The next 5 helical transmembrane spans lie at 12–32 (LFFA…VAIV), 50–70 (PMQW…LVLH), 74–94 (FIMW…LISD), 120–140 (LTFA…FVAF), and 145–165 (AVWV…FVLA).

The protein belongs to the YciB family.

It is found in the cell inner membrane. Functionally, plays a role in cell envelope biogenesis, maintenance of cell envelope integrity and membrane homeostasis. The chain is Inner membrane-spanning protein YciB from Laribacter hongkongensis (strain HLHK9).